The chain runs to 69 residues: MKIAIYKPGGSIMVWGVMAQMKVIDSSELPEYVKDGWLDHPSKLLPVEADDVKPRKGRKPKAVSDADKD.

Positions 48-69 (EADDVKPRKGRKPKAVSDADKD) are disordered.

This is an uncharacterized protein from Salmonella phage P22 (Bacteriophage P22).